Consider the following 1493-residue polypeptide: DNA excision repair protein ERCC-6 (1493 aa).

The segment at 1 to 39 is disordered; sequence MPNEGIPHSSQTQEQDCLQSQPVSNNEEMAIKQESGGDG. The tract at residues 1 to 510 is N-terminal domain; essential for its chromatin remodeling activity; sequence MPNEGIPHSS…GFLFKKLFKY (510 aa). A compositionally biased stretch (polar residues) spans 8–27; that stretch reads HSSQTQEQDCLQSQPVSNNE. The residue at position 10 (serine 10) is a Phosphoserine; by ATM. Residue serine 158 is modified to Phosphoserine; by CDK2. At lysine 170 the chain carries N6-methylated lysine; by EHMT2. Lysine 205 participates in a covalent cross-link: Glycyl lysine isopeptide (Lys-Gly) (interchain with G-Cter in SUMO3). Lysine 255 is covalently cross-linked (Glycyl lysine isopeptide (Lys-Gly) (interchain with G-Cter in SUMO2)). 2 disordered regions span residues 287–323 and 344–453; these read KQGC…VLSK and GKVG…GRYR. Residue lysine 297 is modified to N6-methylated lysine; by EHMT2. Over residues 353–363 the composition is skewed to basic and acidic residues; sequence RPWESDMRPEA. The span at 364–392 shows a compositional bias: acidic residues; that stretch reads EGDSEGEESEYFPTEEEEEEEDDEVEGAE. Serine 429 and serine 430 each carry phosphoserine. Position 448 is an N6-methylated lysine; by EHMT2 (lysine 448). Serine 486 and serine 489 each carry phosphoserine. A Helicase ATP-binding domain is found at 519-695; that stretch reads WELHCQQAGG…WSLFDFIFPG (177 aa). An ATP-binding site is contributed by 532–539; sequence DEMGLGKT. The short motif at 646-649 is the DEAH box element; sequence DEGH. A Helicase C-terminal domain is found at 843 to 1002; the sequence is VVESLLKIWH…RRFFKSNDLY (160 aa). Disordered regions lie at residues 1042-1147, 1181-1247, and 1318-1384; these read PAFG…DESI, HKSK…EQSN, and RGIS…SGPL. Lysine 1054 carries the N6-methylated lysine; by EHMT2 modification. Residues 1123-1141 show a composition bias toward polar residues; that stretch reads ISGNGECSNSSGTGKTSMP. Serine 1142 is modified (phosphoserine). Positions 1200–1210 are enriched in basic residues; it reads LRPKQKPKNSK. Basic and acidic residues-rich tracts occupy residues 1211–1221 and 1232–1247; these read HCRDAKFEGTR and QKQD…EQSN. The span at 1327 to 1336 shows a compositional bias: basic residues; it reads KKSRFGKKRN. The segment covering 1337–1351 has biased composition (polar residues); the sequence is SNFSVQHPSSTSPTE. Residue serine 1348 is modified to Phosphoserine. The segment covering 1352–1376 has biased composition (basic and acidic residues); that stretch reads KCQDGIMKKEGKDNVPEHFSGRAED. Residues 1386-1398 carry the CSA-interacting motif (CIM) motif; sequence SSSLLAKMRARNH. A ubiquitin-binding domain (UBD) region spans residues 1400–1428; it reads ILPERLESESGHLQEASALLPTTEHDDLL. The winged-helix domain (WHD) stretch occupies residues 1429–1493; it reads VEMRNFIAFQ…GIWKLKPEYC (65 aa). The tract at residues 1446–1493 is essential for its interaction with RNA polymerase II, transcription-coupled nucleotide excision repair activity, association with chromatin after UV irradiation and for mediating the UV-induced translocation of ERRC8 to the nuclear matrix; sequence STREILQEFESKLSASQSCVFRELLRNLCTFHRTSGGEGIWKLKPEYC.

Belongs to the SNF2/RAD54 helicase family. In terms of assembly, homodimer. Binds DNA. Interacts with ERCC8. Interacts with RNA polymerase II; interaction is enhanced by UV irradiation. Component of the B-WICH complex, at least composed of SMARCA5/SNF2H, BAZ1B/WSTF, SF3B1, DEK, MYO1C, ERCC6, MYBBP1A and DDX21. Interacts with KIAA1530/UVSSA. Interacts with ELOA and CUL5; the interaction is induced by DNA damaging agents or by inhibitors of RNA polymerase II elongation. Interacts (via WHD region) with RIF1. Interacts with SMARCC2/BAF170, SMARCB1/BAF47 and the neuron-specific chromatin remodeling complex (nBAF complex). Interacts with ERCC5/XPG (via C-terminus); the interaction stimulates ERCC6/CSB binding to the DNA repair bubble and ERCC6/CSB ATPase activity. May form a complex composed of RNA polymerase II, ERCC6/CSB and ERCC5/XPG which associates with the DNA repair bubble during transcription-coupled nucleotide excision repair. Interacts with CAND1, CSTF1, DDX3X, DDX5, DDX17, DDX23, DHX36, HDAC1, HNRNPU, MTA2, PRPF3, PSMD3, RBBP4, SFPQ, SMARCA1, SMARCA2, TOP1, USP7, XRCC5, COPS3, COPS4, COPS6, DDX1, DDX41, GATAD2A, GATAD2B, PRPF4, PSMC5, SF3B2, CTR9, NONO, PSMD12 and TOP2A. Post-translationally, phosphorylated in a cell cycle-dependent manner at Ser-158 by cyclin A-CDK2 and at Ser-10 by ATM in response to DNA damage. Phosphorylation at these two sites promotes the intramolecular interaction of the N-terminal domain with the helicase ATP-binding domain, thereby probably releasing the inhibitory effect of the N-terminal domain on its ATPase activity. Phosphorylation is essential for its chromatin remodeling activity. In terms of processing, ubiquitinated at the C-terminus. Ubiquitination by the CSA complex leads to ERCC6 proteasomal degradation in a UV-dependent manner. Stabilized following interaction with KIAA1530/UVSSA, which promotes recruitment of deubiquitinating enzyme USP7, leading to deubiquitination of ERCC6 thereby preventing UV-induced degradation of ERCC6 by the proteasome. Sumoylation at Lys-205 in an UV-radiation-dependent manner is essential for its transcription-coupled nucleotide excision repair activity.

It is found in the nucleus. The protein localises to the chromosome. The catalysed reaction is ATP + H2O = ADP + phosphate + H(+). In terms of biological role, essential factor involved in transcription-coupled nucleotide excision repair (TC-NER), a process during which RNA polymerase II-blocking lesions are rapidly removed from the transcribed strand of active genes. Plays a central role in the initiation of the TC-NER process: specifically recognizes and binds RNA polymerase II stalled at a lesion, and mediates recruitment of ERCC8/CSA, initiating DNA damage excision by TFIIH recruitment. Upon DNA-binding, it locally modifies DNA conformation by wrapping the DNA around itself, thereby modifying the interface between stalled RNA polymerase II and DNA. Acts as a chromatin remodeler at DSBs; DNA-dependent ATPase-dependent activity is essential for this function. Plays an important role in regulating the choice of the DNA double-strand breaks (DSBs) repair pathway and G2/M checkpoint activation; DNA-dependent ATPase activity is essential for this function. Regulates the DNA repair pathway choice by inhibiting non-homologous end joining (NHEJ), thereby promoting the homologous recombination (HR)-mediated repair of DSBs during the S/G2 phases of the cell cycle. Mediates the activation of the ATM- and CHEK2-dependent DNA damage responses thus preventing premature entry of cells into mitosis following the induction of DNA DSBs. Remodels chromatin by evicting histones from chromatin flanking DSBs, limiting RIF1 accumulation at DSBs thereby promoting BRCA1-mediated HR. Required for stable recruitment of ELOA and CUL5 to DNA damage sites. Also involved in UV-induced translocation of ERCC8 to the nuclear matrix. Essential for neuronal differentiation and neuritogenesis; regulates transcription and chromatin remodeling activities required during neurogenesis. The chain is DNA excision repair protein ERCC-6 from Homo sapiens (Human).